A 171-amino-acid chain; its full sequence is MEIILIKPVRKLGKIGDMLKVADGFGRNYLLPQKLAIRATEPNKELIVKQKHEFEAKDKQIREEVEKINALIKDQKLVFIRQTSDDGKLFGSVTNKEIADKLSENVSYNIAHSNIILDKQIKFTGIYTVEIRLHAELNAIVTVIVARSESEAQDYLREQKTETSEDLAESA.

Belongs to the bacterial ribosomal protein bL9 family.

Its function is as follows. Binds to the 23S rRNA. The sequence is that of Large ribosomal subunit protein bL9 from Rickettsia felis (strain ATCC VR-1525 / URRWXCal2) (Rickettsia azadi).